The sequence spans 460 residues: Light-independent protochlorophyllide reductase subunit N (460 aa).

[4Fe-4S] cluster contacts are provided by C22, C47, and C107.

This sequence belongs to the BchN/ChlN family. Protochlorophyllide reductase is composed of three subunits; ChlL, ChlN and ChlB. Forms a heterotetramer of two ChlB and two ChlN subunits. The cofactor is [4Fe-4S] cluster.

It catalyses the reaction chlorophyllide a + oxidized 2[4Fe-4S]-[ferredoxin] + 2 ADP + 2 phosphate = protochlorophyllide a + reduced 2[4Fe-4S]-[ferredoxin] + 2 ATP + 2 H2O. It functions in the pathway porphyrin-containing compound metabolism; chlorophyll biosynthesis (light-independent). In terms of biological role, component of the dark-operative protochlorophyllide reductase (DPOR) that uses Mg-ATP and reduced ferredoxin to reduce ring D of protochlorophyllide (Pchlide) to form chlorophyllide a (Chlide). This reaction is light-independent. The NB-protein (ChlN-ChlB) is the catalytic component of the complex. The polypeptide is Light-independent protochlorophyllide reductase subunit N (Thermosynechococcus vestitus (strain NIES-2133 / IAM M-273 / BP-1)).